The sequence spans 232 residues: 7-cyano-7-deazaguanine synthase (232 aa).

7-17 (CSGGLDSVSLA) provides a ligand contact to ATP. The Zn(2+) site is built by cysteine 185, cysteine 193, cysteine 196, and cysteine 199.

Belongs to the QueC family. Requires Zn(2+) as cofactor.

The enzyme catalyses 7-carboxy-7-deazaguanine + NH4(+) + ATP = 7-cyano-7-deazaguanine + ADP + phosphate + H2O + H(+). Its pathway is purine metabolism; 7-cyano-7-deazaguanine biosynthesis. Its function is as follows. Catalyzes the ATP-dependent conversion of 7-carboxy-7-deazaguanine (CDG) to 7-cyano-7-deazaguanine (preQ(0)). This is 7-cyano-7-deazaguanine synthase from Brucella canis (strain ATCC 23365 / NCTC 10854 / RM-666).